The chain runs to 227 residues: Izumo sperm-egg fusion protein 4 (227 aa).

An N-terminal signal peptide occupies residues methionine 1–alanine 24. N-linked (GlcNAc...) asparagine glycans are attached at residues asparagine 153 and asparagine 214.

The protein belongs to the Izumo family.

It is found in the secreted. The protein is Izumo sperm-egg fusion protein 4 (Izumo4) of Mus musculus (Mouse).